A 466-amino-acid polypeptide reads, in one-letter code: Gamma-glutamylpolyamine synthetase GlnA3 (466 aa).

A GS catalytic domain is found at 127 to 466 (GRTVLRRIVA…GVAAAYRWKY (340 aa)). E151 and E153 together coordinate Mg(2+). E202 contributes to the ATP binding site. Mg(2+) contacts are provided by E207 and E214. Position 259 (G259) interacts with L-glutamate. Residue H263 coordinates Mg(2+). S267 provides a ligand contact to ATP. L-glutamate is bound by residues R316 and R334. 2 residues coordinate ATP: R334 and R339. Residue E355 coordinates Mg(2+).

This sequence belongs to the glutamine synthetase family. Mg(2+) is required as a cofactor. In terms of tissue distribution, expressed in mycelium.

The catalysed reaction is spermine + L-glutamate + ATP = gamma-L-glutamylspermine + ADP + phosphate + H(+). It carries out the reaction spermidine + L-glutamate + ATP = gamma-L-glutamylspermidine + ADP + phosphate + H(+). The enzyme catalyses putrescine + L-glutamate + ATP = gamma-L-glutamylputrescine + ADP + phosphate + H(+). It catalyses the reaction cadaverine + L-glutamate + ATP = gamma-L-glutamylcadaverine + ADP + phosphate + H(+). It functions in the pathway amine and polyamine degradation; putrescine degradation. Its pathway is amine and polyamine degradation; spermidine degradation. The protein operates within amine and polyamine degradation; spermine degradation. In terms of biological role, involved in the catabolism of polyamines. Catalyzes the ATP-dependent gamma-glutamylation of polyamines. Substrates include putrescine, cadaverine, spermidine and spermine, with a preference for long-chain polyamines spermidine and spermine. Is not able to compensate for the loss of glutamine synthetases (GSs). No complementation of the L-glutamine auxotrophy of an E.coli glnA mutant. Involved in morphological differentiation and in the production of secondary metabolites. Together with GlnA2, enables survival of S.coelicolor under exposure to high local environmental polyamine concentrations, which is toxic to the cells. The protein is Gamma-glutamylpolyamine synthetase GlnA3 of Streptomyces coelicolor (strain ATCC BAA-471 / A3(2) / M145).